The chain runs to 493 residues: GPI alpha-1,6-mannosyltransferase 2 (493 aa).

Residues 1–13 (MGLLDPSQKEVLR) lie on the Cytoplasmic side of the membrane. The chain crosses the membrane as a helical span at residues 14–34 (FAVNCRILTLVLQALFNLIIP). The Lumenal segment spans residues 35–77 (DHHADAFCPPRLAPSGSADQLVEGLLGGLSRWDAEHFLFIAEH). Residues 78–98 (GYLYEHNFAFFPGFPLALLMG) form a helical membrane-spanning segment. Residues 99–113 (TELLRPLQGLLSQRS) are Cytoplasmic-facing. Residues 114-134 (CLLVSVALLNLLFSVLAAVAL) form a helical membrane-spanning segment. The Lumenal segment spans residues 135–136 (HD). Residues 137–157 (LGCLVLHCPRQALCAALLFCI) form a helical membrane-spanning segment. Topologically, residues 158-161 (SPAN) are cytoplasmic. A helical membrane pass occupies residues 162 to 182 (VFLAAGYSEALFAFLTFSAMG). At 183-192 (QLERGRGWAS) the chain is on the lumenal side. The helical transmembrane segment at 193-213 (GLLFALAAGVRSNGLVSLGFL) threads the bilayer. Residues 214 to 234 (LHSQCRGFCSSLAVLSPWKPL) are Cytoplasmic-facing. The helical transmembrane segment at 235 to 255 (VKLMASVCLSVLIVSLPFALF) threads the bilayer. Residues 256–327 (QYRAYIQFCS…RYYELKQVPN (72 aa)) lie on the Lumenal side of the membrane. Residues 328-348 (FLLATPVTVLVVWATWTYVTT) form a helical membrane-spanning segment. Over 349–378 (HPWLCLTLGLQRTKDRENPEKPHRGFLSPK) the chain is Cytoplasmic. Residues 379–399 (VFVYLVHAAALLVFGGLCMHV) form a helical membrane-spanning segment. The Lumenal segment spans residues 400 to 469 (QVLTRFLASS…DWKRCSPVTR (70 aa)). Residues 470–490 (CVLVYFLTYWLLGLILHCNFL) form a helical membrane-spanning segment. Topologically, residues 491–493 (PWT) are cytoplasmic.

This sequence belongs to the PIGV family. In terms of processing, not N-glycosylated.

The protein resides in the endoplasmic reticulum membrane. The protein operates within glycolipid biosynthesis; glycosylphosphatidylinositol-anchor biosynthesis. Functionally, alpha-1,6-mannosyltransferase that catalyzes the transfer of the second mannose, via an alpha-1,6 bond, from a dolichol-phosphate-mannose (Dol-P-Man) to the alpha-D-Man-(1-&gt;4)-alpha-D-GlcN-(1-&gt;6)-(1-radyl,2-acyl-sn-glycero-3-phospho)-2-acyl-inositol (also termed H2) intermediate to generate an alpha-D-Man-(1-&gt;6)-alpha-D-Man-(1-&gt;4)-alpha-D-GlcN-(1-&gt;6)-(1-radyl,2-acyl-sn-glycero-3-phospho)-2-acyl-inositol (also termed H3) and participates in the seventh step of the glycosylphosphatidylinositol-anchor biosynthesis. Also transfers the second mannose on a 2-PEtn-alpha-D-Man-(1-&gt;4)-alpha-D-GlcN-(1-&gt;6)-(1-radyl,2-acyl-sn-glycero-3-phospho)-2-acyl-inositol (also termed H5). In Mus musculus (Mouse), this protein is GPI alpha-1,6-mannosyltransferase 2.